A 342-amino-acid chain; its full sequence is S-adenosylmethionine:tRNA ribosyltransferase-isomerase (342 aa).

It belongs to the QueA family. As to quaternary structure, monomer.

The protein localises to the cytoplasm. The enzyme catalyses 7-aminomethyl-7-carbaguanosine(34) in tRNA + S-adenosyl-L-methionine = epoxyqueuosine(34) in tRNA + adenine + L-methionine + 2 H(+). It functions in the pathway tRNA modification; tRNA-queuosine biosynthesis. In terms of biological role, transfers and isomerizes the ribose moiety from AdoMet to the 7-aminomethyl group of 7-deazaguanine (preQ1-tRNA) to give epoxyqueuosine (oQ-tRNA). This chain is S-adenosylmethionine:tRNA ribosyltransferase-isomerase, found in Listeria monocytogenes serotype 4a (strain HCC23).